The primary structure comprises 173 residues: Mesencephalic astrocyte-derived neurotrophic factor homolog (173 aa).

The first 22 residues, 1-22 (MKTTHLVLVLCFLAGVAQTTLA), serve as a signal peptide directing secretion. 4 disulfide bridges follow: cysteine 28–cysteine 114, cysteine 31–cysteine 103, cysteine 61–cysteine 72, and cysteine 148–cysteine 151.

The protein belongs to the ARMET family.

The protein localises to the secreted. In terms of biological role, required during the maturation of the embryonic nervous system for maintenance of neuronal and cuticular connectivity. Essential for maintenance of dopaminergic neurons and dopamine levels. This is Mesencephalic astrocyte-derived neurotrophic factor homolog from Drosophila persimilis (Fruit fly).